We begin with the raw amino-acid sequence, 284 residues long: tRNA uridine(34) hydroxylase (284 aa).

Residues 132–226 form the Rhodanese domain; sequence AGRPVVMLDT…YFEEVGGAHY (95 aa). Cys-186 (cysteine persulfide intermediate) is an active-site residue.

Belongs to the TrhO family.

It catalyses the reaction uridine(34) in tRNA + AH2 + O2 = 5-hydroxyuridine(34) in tRNA + A + H2O. Its function is as follows. Catalyzes oxygen-dependent 5-hydroxyuridine (ho5U) modification at position 34 in tRNAs. The sequence is that of tRNA uridine(34) hydroxylase from Burkholderia cenocepacia (strain HI2424).